Consider the following 256-residue polypeptide: Imidazole glycerol phosphate synthase subunit HisF (256 aa).

Catalysis depends on residues Asp-12 and Asp-131.

Belongs to the HisA/HisF family. Heterodimer of HisH and HisF.

The protein localises to the cytoplasm. The enzyme catalyses 5-[(5-phospho-1-deoxy-D-ribulos-1-ylimino)methylamino]-1-(5-phospho-beta-D-ribosyl)imidazole-4-carboxamide + L-glutamine = D-erythro-1-(imidazol-4-yl)glycerol 3-phosphate + 5-amino-1-(5-phospho-beta-D-ribosyl)imidazole-4-carboxamide + L-glutamate + H(+). It participates in amino-acid biosynthesis; L-histidine biosynthesis; L-histidine from 5-phospho-alpha-D-ribose 1-diphosphate: step 5/9. IGPS catalyzes the conversion of PRFAR and glutamine to IGP, AICAR and glutamate. The HisF subunit catalyzes the cyclization activity that produces IGP and AICAR from PRFAR using the ammonia provided by the HisH subunit. This Renibacterium salmoninarum (strain ATCC 33209 / DSM 20767 / JCM 11484 / NBRC 15589 / NCIMB 2235) protein is Imidazole glycerol phosphate synthase subunit HisF.